We begin with the raw amino-acid sequence, 201 residues long: Small ribosomal subunit protein uS4 (201 aa).

Residues 91–157 (SRLDNVVYRA…VPFQIARETA (67 aa)) enclose the S4 RNA-binding domain.

Belongs to the universal ribosomal protein uS4 family. In terms of assembly, part of the 30S ribosomal subunit. Contacts protein S5. The interaction surface between S4 and S5 is involved in control of translational fidelity.

In terms of biological role, one of the primary rRNA binding proteins, it binds directly to 16S rRNA where it nucleates assembly of the body of the 30S subunit. Its function is as follows. With S5 and S12 plays an important role in translational accuracy. The sequence is that of Small ribosomal subunit protein uS4 from Mycolicibacterium paratuberculosis (strain ATCC BAA-968 / K-10) (Mycobacterium paratuberculosis).